The chain runs to 340 residues: N-acetyl-gamma-glutamyl-phosphate reductase (340 aa).

Cysteine 151 is a catalytic residue.

Belongs to the NAGSA dehydrogenase family. Type 1 subfamily.

The protein resides in the cytoplasm. The catalysed reaction is N-acetyl-L-glutamate 5-semialdehyde + phosphate + NADP(+) = N-acetyl-L-glutamyl 5-phosphate + NADPH + H(+). Its pathway is amino-acid biosynthesis; L-arginine biosynthesis; N(2)-acetyl-L-ornithine from L-glutamate: step 3/4. Its function is as follows. Catalyzes the NADPH-dependent reduction of N-acetyl-5-glutamyl phosphate to yield N-acetyl-L-glutamate 5-semialdehyde. This Aquifex aeolicus (strain VF5) protein is N-acetyl-gamma-glutamyl-phosphate reductase.